The chain runs to 91 residues: Potassium channel toxin TstKMK (91 aa).

Residues 1-25 (MVATNRCCVFALLFALLLVHSLTEA) form the signal peptide. Positions 26 to 42 (GKGKEILGKIKEKIIEA) are excised as a propeptide. In terms of domain architecture, BetaSPN-type CS-alpha/beta spans 58 to 91 (EYACPAIDKFCEDHCAAKKAVGKCDDFKCKCIKL). Intrachain disulfides connect cysteine 61–cysteine 81, cysteine 68–cysteine 86, and cysteine 72–cysteine 88.

This sequence belongs to the long chain scorpion toxin family. Class 2 subfamily. As to expression, expressed by the venom gland.

Its subcellular location is the secreted. In terms of biological role, the full peptide presents antibacterial and cytotoxic activities. The synthetic C-terminus (AA 33-76) inhibits voltage-gated potassium channels Kv1.1/KCNA1, Kv1.2/KCNA2, and Kv1.3/KCNA3. The sequence is that of Potassium channel toxin TstKMK from Tityus stigmurus (Brazilian scorpion).